The primary structure comprises 251 residues: MTEQKITFADQKRKTVEIAEFTEDGRYKRKVRSFVLRTGRLSEFQRNMMNNNWATLGLEYQTTAFDFTQIYGNTNPVILEIGFGMGKSLVEMALQNPDKNYLGIEVHTPGVGACIAYAVEKQVKNLRVICHDATEILQDCIADNSLAGLQLFFPDPWHKTKHHKRRIVQPHFVEKIQQKLVPNGFVHMATDWENYAEYMLEVLTSAVGLRNTSATNDYIPRPDFRPLTKFEQRGHKLGHGVWDLFFIKNIT.

S-adenosyl-L-methionine-binding residues include glutamate 80, glutamate 105, aspartate 132, and aspartate 155. Aspartate 155 is a catalytic residue. Residues lysine 159, aspartate 191, and threonine 228–glutamate 231 each bind substrate.

It belongs to the class I-like SAM-binding methyltransferase superfamily. TrmB family.

The catalysed reaction is guanosine(46) in tRNA + S-adenosyl-L-methionine = N(7)-methylguanosine(46) in tRNA + S-adenosyl-L-homocysteine. It functions in the pathway tRNA modification; N(7)-methylguanine-tRNA biosynthesis. In terms of biological role, catalyzes the formation of N(7)-methylguanine at position 46 (m7G46) in tRNA. The chain is tRNA (guanine-N(7)-)-methyltransferase from Histophilus somni (strain 129Pt) (Haemophilus somnus).